Consider the following 529-residue polypeptide: F-box/LRR-repeat protein At5g63520 (529 aa).

Residues 1–22 form a disordered region; it reads MAEVSLTKKEMTTKGKSENSKK. One can recognise an F-box domain in the interval 31 to 78; it reads VPIAAMNEDLLHNILLRLPAKSFAFASCVNRFWSSVCNRILSRPKMIS. LRR repeat units follow at residues 265–288 and 418–441; these read GNEP…IFAR and QVYL…LRNL.

The polypeptide is F-box/LRR-repeat protein At5g63520 (Arabidopsis thaliana (Mouse-ear cress)).